The following is a 189-amino-acid chain: Auxin-responsive protein IAA3 (189 aa).

The short motif at 12–16 (LRLGL) is the EAR-like (transcriptional repression) element. The segment at 42–65 (TDTEKEIESSSRKTETSPPRKAQI) is disordered. The segment covering 43–56 (DTEKEIESSSRKTE) has biased composition (basic and acidic residues). The 88-residue stretch at 92-179 (GIYVKVSMDG…TCKRLRIMKG (88 aa)) folds into the PB1 domain.

It belongs to the Aux/IAA family. As to quaternary structure, homodimers and heterodimers. Interacts with TPL. Interacts with TIR1, the F-box component of the Skp1-Cdc53/cullin-F-box (SCFTIR1) E3 ubiquitin ligase complex. In terms of processing, phosphorylated by phytochrome A in vitro. Highly expressed in stems and flowers. Expressed in hypocotyls, cotyledons and leaves, but barely detected in roots. Expressed in root tips. In the root meristem, specifically detected at the vascular tissue transition zone.

The protein localises to the nucleus. Aux/IAA proteins are short-lived transcriptional factors that function as repressors of early auxin response genes at low auxin concentrations. Repression is thought to result from the interaction with auxin response factors (ARFs), proteins that bind to the auxin-responsive promoter element (AuxRE). Plays a central role in auxin regulation of root growth, in gravitropism, and in lateral root formation. Regulated by an auxin-induced protein turnover. Formation of heterodimers with ARF proteins may alter their ability to modulate early auxin response genes expression. When activated by cytokinin, restricts the expression of the PIN genes to the vascular transition zone. Induction of SHY2 in the vascular transition zone restricts BRX expression to down-regulate PIN3 and thus limit meristem growth, but proper SHY2 expression requires BRX. Involved in meristem growth and in determining its size. May participate in strigolactone signaling to regulate meristem size and lateral root formation. The polypeptide is Auxin-responsive protein IAA3 (IAA3) (Arabidopsis thaliana (Mouse-ear cress)).